The sequence spans 341 residues: 2-dehydro-3-deoxy-L-galactonate 5-dehydrogenase (341 aa).

Cys37 serves as a coordination point for Zn(2+). Active-site charge relay system residues include Thr39 and His42. Positions 60, 61, 90, 93, 96, and 104 each coordinate Zn(2+).

Belongs to the zinc-containing alcohol dehydrogenase family. Zn(2+) serves as cofactor.

It carries out the reaction 2-dehydro-3-deoxy-L-galactonate + NAD(+) = 3-deoxy-D-glycero-2,5-hexodiulosonate + NADH + H(+). Involved in the degradation of 3,6-anhydro-L-galactose, which is the major monomeric sugar of red macroalgae. Catalyzes the third step of the pathway, the NAD(+)-dependent oxidation of 2-dehydro-3-deoxy-L-galactonate (L-KDGal) to 3-deoxy-D-glycero-2,5-hexodiulosonate (L-DDGal). In Pseudoalteromonas atlantica (strain T6c / ATCC BAA-1087), this protein is 2-dehydro-3-deoxy-L-galactonate 5-dehydrogenase.